Reading from the N-terminus, the 319-residue chain is MNPDFLDFEQPIAELEAKIEELRYVGDDAEVNIQEEISRLQAKCKSLTESIFSKLSAWQVAQLARHPRRPYTLDYIGRLFTDFEELHGDRAYADDAAIVGGMARFDGQPVVVIGHQKGRDTKEKIRRNFGMPRPEGYRKALRLMRLAERFRLPVFTFIDTPGAYPGVGAEERGQSEAIAMNLQVMAGLRTPVICTVIGEGGSGGALAIGVGDRVMMLQYSTYSVISPEGCASILWKSAERASDAAEALGITSARLKELGLIDTIIPEPLGGAHRNPEQMAGNLHTALAEALQTFSAMDTDALLERRYGRLMGYGEYKEG.

The region spanning 32–293 is the CoA carboxyltransferase C-terminal domain; it reads NIQEEISRLQ…HTALAEALQT (262 aa).

Belongs to the AccA family. Acetyl-CoA carboxylase is a heterohexamer composed of biotin carboxyl carrier protein (AccB), biotin carboxylase (AccC) and two subunits each of ACCase subunit alpha (AccA) and ACCase subunit beta (AccD).

It localises to the cytoplasm. It catalyses the reaction N(6)-carboxybiotinyl-L-lysyl-[protein] + acetyl-CoA = N(6)-biotinyl-L-lysyl-[protein] + malonyl-CoA. The protein operates within lipid metabolism; malonyl-CoA biosynthesis; malonyl-CoA from acetyl-CoA: step 1/1. Functionally, component of the acetyl coenzyme A carboxylase (ACC) complex. First, biotin carboxylase catalyzes the carboxylation of biotin on its carrier protein (BCCP) and then the CO(2) group is transferred by the carboxyltransferase to acetyl-CoA to form malonyl-CoA. This Thioalkalivibrio sulfidiphilus (strain HL-EbGR7) protein is Acetyl-coenzyme A carboxylase carboxyl transferase subunit alpha.